Consider the following 485-residue polypeptide: Zinc finger protein 639 (485 aa).

The segment covering 1–14 (MSEYPKKRKRKTLH) has biased composition (basic residues). Disordered stretches follow at residues 1–23 (MSEY…DSSG) and 54–82 (DNKD…SRSQ). Serine 60 bears the Phosphoserine mark. A Glycyl lysine isopeptide (Lys-Gly) (interchain with G-Cter in SUMO2) cross-link involves residue lysine 76. Serine 88 bears the Phosphoserine mark. Glycyl lysine isopeptide (Lys-Gly) (interchain with G-Cter in SUMO2) cross-links involve residues lysine 177, lysine 181, and lysine 226. C2H2-type zinc fingers lie at residues 204–227 (YKCE…ILKH), 233–255 (NVCR…AKLH), 260–283 (YICK…ADTH), 289–311 (YWCE…FQEH), 374–397 (FVCQ…AIEH), 403–425 (HVCD…LNSH), 431–454 (YLCQ…DFKH), and 460–482 (HKCS…LPVH). Residues 371-455 (KNFFVCQVCG…LKIHLDFKHS (85 aa)) are interaction with CTNNA2.

This sequence belongs to the krueppel C2H2-type zinc-finger protein family. As to quaternary structure, interacts with CTNNA2.

It is found in the nucleus. Functionally, binds DNA and may function as a transcriptional repressor. The polypeptide is Zinc finger protein 639 (Znf639) (Rattus norvegicus (Rat)).